A 148-amino-acid polypeptide reads, in one-letter code: Large ribosomal subunit protein bL9 (148 aa).

Belongs to the bacterial ribosomal protein bL9 family.

Its function is as follows. Binds to the 23S rRNA. The polypeptide is Large ribosomal subunit protein bL9 (Alkaliphilus oremlandii (strain OhILAs) (Clostridium oremlandii (strain OhILAs))).